Consider the following 93-residue polypeptide: uncharacterized protein (93 aa).

Positions 73 to 93 (KWTVSGPVKQDTGKTDPAEKN) are disordered. Residues 83–93 (DTGKTDPAEKN) show a composition bias toward basic and acidic residues.

This is an uncharacterized protein from Rhodobacter capsulatus (Rhodopseudomonas capsulata).